A 136-amino-acid polypeptide reads, in one-letter code: NLP effector protein 13 (136 aa).

The short motif at 1–9 (MYSWYFPKD) is the Conserved undecapeptide motif I element. The Hepta-peptide GHRHDWE motif II signature appears at 16-22 (GHRHDWE).

Belongs to the Necrosis inducing protein (NPP1) family.

The protein resides in the secreted. Secreted effector that contributes moderately to virulence during infection by P.capsici. Causes only small yellow areas at 3 days after inoculation of host C.annuum leaves; these areas expand somewhat and became necrotic at 7 days after inoculation. Leads only to chlorotic areas, without necrosis at 7 days after non-host N.benthamiana leaves infection. The chain is NLP effector protein 13 from Phytophthora capsici.